We begin with the raw amino-acid sequence, 211 residues long: Adenylyl-sulfate kinase (211 aa).

32–39 contributes to the ATP binding site; the sequence is GLSASGKS. Ser107 acts as the Phosphoserine intermediate in catalysis.

Belongs to the APS kinase family. In terms of assembly, homodimer.

It catalyses the reaction adenosine 5'-phosphosulfate + ATP = 3'-phosphoadenylyl sulfate + ADP + H(+). It functions in the pathway sulfur metabolism; hydrogen sulfide biosynthesis; sulfite from sulfate: step 2/3. Its function is as follows. Catalyzes the synthesis of activated sulfate. This is Adenylyl-sulfate kinase from Penicillium chrysogenum (Penicillium notatum).